The sequence spans 242 residues: tRNA pseudouridine synthase A (242 aa).

Catalysis depends on aspartate 51, which acts as the Nucleophile. Tyrosine 107 is a binding site for substrate.

Belongs to the tRNA pseudouridine synthase TruA family. In terms of assembly, homodimer.

It carries out the reaction uridine(38/39/40) in tRNA = pseudouridine(38/39/40) in tRNA. Functionally, formation of pseudouridine at positions 38, 39 and 40 in the anticodon stem and loop of transfer RNAs. This is tRNA pseudouridine synthase A from Helicobacter acinonychis (strain Sheeba).